The chain runs to 308 residues: S-adenosylmethionine-dependent nucleotide dehydratase (308 aa).

Positions 7-253 (SIQELVINFH…WQSYLMINPE (247 aa)) constitute a Radical SAM core domain. [4Fe-4S] cluster-binding residues include Cys-21, Cys-25, and Cys-28.

It belongs to the radical SAM superfamily. Viperin family. It depends on [4Fe-4S] cluster as a cofactor.

The catalysed reaction is CTP + AH2 + S-adenosyl-L-methionine = 3'-deoxy-3',4'-didehydro-CTP + 5'-deoxyadenosine + L-methionine + A + H2O + H(+). The enzyme catalyses GTP + AH2 + S-adenosyl-L-methionine = 3'-deoxy-3',4'-didehydro-GTP + 5'-deoxyadenosine + L-methionine + A + H2O + H(+). It catalyses the reaction UTP + AH2 + S-adenosyl-L-methionine = 3'-deoxy-3',4'-didehydro-UTP + 5'-deoxyadenosine + L-methionine + A + H2O + H(+). Functionally, expression of pVip58 in E.coli (strain MG1655) confers resistance to phages lambda, P1 and T7; delays culture collapse upon infection with T7. Catalyzes the conversion of cytidine triphosphate (CTP) to 3'-deoxy-3',4'-didehydro-CTP (ddhCTP), guanosine triphosphate (GTP) to 3'-deoxy-3',4'-didehydro-GTP (ddhGTP) and uridine triphosphate (UTP) to 3'-deoxy-3',4'-didehydro-UTP (ddhUTP), probably via a SAM-dependent radical mechanism. The modified nucleotide represses transcription from T7 RNA polymerase-directed genes (possibly by acting as chain terminators), strongly suggesting these nucleotides block viral polymerase transcription. This is S-adenosylmethionine-dependent nucleotide dehydratase from Pseudoalteromonas ulvae.